A 1091-amino-acid polypeptide reads, in one-letter code: Error-prone DNA polymerase (1091 aa).

The interval 1-51 (MGWSNGPPSWAEMERVLNGKPRHAGVPAFDADGDVPRSRKRGAYQPPGRER) is disordered.

The protein belongs to the DNA polymerase type-C family. DnaE2 subfamily.

It localises to the cytoplasm. It catalyses the reaction DNA(n) + a 2'-deoxyribonucleoside 5'-triphosphate = DNA(n+1) + diphosphate. Its function is as follows. DNA polymerase involved in damage-induced mutagenesis and translesion synthesis (TLS). It is not the major replicative DNA polymerase. This chain is Error-prone DNA polymerase, found in Mycobacterium bovis (strain ATCC BAA-935 / AF2122/97).